We begin with the raw amino-acid sequence, 267 residues long: 4-hydroxy-tetrahydrodipicolinate reductase (267 aa).

Residue 10 to 15 (GCLGKQ) participates in NAD(+) binding. Arg-37 serves as a coordination point for NADP(+). Residues 99–101 (GTT) and 122–125 (TTNV) each bind NAD(+). His-154 (proton donor/acceptor) is an active-site residue. His-155 contributes to the (S)-2,3,4,5-tetrahydrodipicolinate binding site. The active-site Proton donor is the Lys-158. 164–165 (GT) serves as a coordination point for (S)-2,3,4,5-tetrahydrodipicolinate.

Belongs to the DapB family.

It is found in the cytoplasm. The catalysed reaction is (S)-2,3,4,5-tetrahydrodipicolinate + NAD(+) + H2O = (2S,4S)-4-hydroxy-2,3,4,5-tetrahydrodipicolinate + NADH + H(+). The enzyme catalyses (S)-2,3,4,5-tetrahydrodipicolinate + NADP(+) + H2O = (2S,4S)-4-hydroxy-2,3,4,5-tetrahydrodipicolinate + NADPH + H(+). It functions in the pathway amino-acid biosynthesis; L-lysine biosynthesis via DAP pathway; (S)-tetrahydrodipicolinate from L-aspartate: step 4/4. Functionally, catalyzes the conversion of 4-hydroxy-tetrahydrodipicolinate (HTPA) to tetrahydrodipicolinate. The sequence is that of 4-hydroxy-tetrahydrodipicolinate reductase from Ehrlichia canis (strain Jake).